The following is a 937-amino-acid chain: Isoleucine--tRNA ligase (937 aa).

The 'HIGH' region motif lies at 58-68; that stretch reads PYANGHIHLGT. An L-isoleucyl-5'-AMP-binding site is contributed by Glu-566. The short motif at 607–611 is the 'KMSKS' region element; the sequence is KMSKS. Lys-610 serves as a coordination point for ATP. 4 residues coordinate Zn(2+): Cys-906, Cys-909, Cys-925, and Cys-928.

It belongs to the class-I aminoacyl-tRNA synthetase family. IleS type 1 subfamily. In terms of assembly, monomer. Zn(2+) serves as cofactor.

It is found in the cytoplasm. It carries out the reaction tRNA(Ile) + L-isoleucine + ATP = L-isoleucyl-tRNA(Ile) + AMP + diphosphate. Its function is as follows. Catalyzes the attachment of isoleucine to tRNA(Ile). As IleRS can inadvertently accommodate and process structurally similar amino acids such as valine, to avoid such errors it has two additional distinct tRNA(Ile)-dependent editing activities. One activity is designated as 'pretransfer' editing and involves the hydrolysis of activated Val-AMP. The other activity is designated 'posttransfer' editing and involves deacylation of mischarged Val-tRNA(Ile). The chain is Isoleucine--tRNA ligase from Lawsonia intracellularis (strain PHE/MN1-00).